A 155-amino-acid polypeptide reads, in one-letter code: NADPH-dependent 7-cyano-7-deazaguanine reductase (155 aa).

Residue Cys-53 is the Thioimide intermediate of the active site. Asp-60 functions as the Proton donor in the catalytic mechanism. Substrate is bound by residues 75–77 (VES) and 94–95 (HE).

Belongs to the GTP cyclohydrolase I family. QueF type 1 subfamily.

The protein resides in the cytoplasm. The catalysed reaction is 7-aminomethyl-7-carbaguanine + 2 NADP(+) = 7-cyano-7-deazaguanine + 2 NADPH + 3 H(+). Its pathway is tRNA modification; tRNA-queuosine biosynthesis. In terms of biological role, catalyzes the NADPH-dependent reduction of 7-cyano-7-deazaguanine (preQ0) to 7-aminomethyl-7-deazaguanine (preQ1). This Brucella suis (strain ATCC 23445 / NCTC 10510) protein is NADPH-dependent 7-cyano-7-deazaguanine reductase.